A 306-amino-acid chain; its full sequence is GTP cyclohydrolase FolE2 (306 aa).

The protein belongs to the GTP cyclohydrolase IV family.

The enzyme catalyses GTP + H2O = 7,8-dihydroneopterin 3'-triphosphate + formate + H(+). It functions in the pathway cofactor biosynthesis; 7,8-dihydroneopterin triphosphate biosynthesis; 7,8-dihydroneopterin triphosphate from GTP: step 1/1. Functionally, converts GTP to 7,8-dihydroneopterin triphosphate. This Pseudoalteromonas atlantica (strain T6c / ATCC BAA-1087) protein is GTP cyclohydrolase FolE2.